A 291-amino-acid polypeptide reads, in one-letter code: Ribosomal large subunit pseudouridine synthase B (291 aa).

One can recognise an S4 RNA-binding domain in the interval 3 to 75; that stretch reads EKLQKVLARA…ICRVLAYYKP (73 aa). The active-site Nucleophile is Asp-110. Residues 256 to 291 are disordered; the sequence is VEKDRRRMKANQIRRAVKRHSQVSGGRRSGGRNNNG.

It belongs to the pseudouridine synthase RsuA family.

It carries out the reaction uridine(2605) in 23S rRNA = pseudouridine(2605) in 23S rRNA. Responsible for synthesis of pseudouridine from uracil-2605 in 23S ribosomal RNA. The chain is Ribosomal large subunit pseudouridine synthase B (rluB) from Escherichia coli O6:H1 (strain CFT073 / ATCC 700928 / UPEC).